The sequence spans 113 residues: Death-associated protein-like 1.L (113 aa).

The tract at residues 1–57 (MAKEQKMQSSPQALKAGHLPAVKAGGMRVSKKQGNEENSAPEKNAKKTLQEKPSSVL) is disordered.

This sequence belongs to the DAP-DAPL1 family. In terms of assembly, associates with ribosomes; preventing translation. Interacts with eiF5a (eif5a and eif5a2); preventing translation.

Functionally, ribosome-binding protein that promotes ribosome hibernation, a process during which ribosomes are stabilized in an inactive state and preserved from proteasomal degradation. Acts via its association with eiF5a (eif5a and eif5a2) at the polypeptide exit tunnel of the ribosome, preventing mRNA translation. Plays a key role in ribosome hibernation in the mature egg by preventing mRNA translation, leading to ribosome inactivation. Ribosomes, which are produced in large quantities during oogenesis, are stored and translationally repressed in the egg and early embryo. The chain is Death-associated protein-like 1.L (dapl1.L) from Xenopus laevis (African clawed frog).